The sequence spans 312 residues: Glyoxylate/hydroxypyruvate reductase A (312 aa).

The active site involves Arg-227. His-275 acts as the Proton donor in catalysis.

This sequence belongs to the D-isomer specific 2-hydroxyacid dehydrogenase family. GhrA subfamily.

It is found in the cytoplasm. It catalyses the reaction glycolate + NADP(+) = glyoxylate + NADPH + H(+). The catalysed reaction is (R)-glycerate + NAD(+) = 3-hydroxypyruvate + NADH + H(+). The enzyme catalyses (R)-glycerate + NADP(+) = 3-hydroxypyruvate + NADPH + H(+). Functionally, catalyzes the NADPH-dependent reduction of glyoxylate and hydroxypyruvate into glycolate and glycerate, respectively. The protein is Glyoxylate/hydroxypyruvate reductase A of Salmonella agona (strain SL483).